The chain runs to 256 residues: Hydroxyacylglutathione hydrolase (256 aa).

7 residues coordinate Zn(2+): His53, His55, Asp57, His58, His113, Asp130, and His168.

It belongs to the metallo-beta-lactamase superfamily. Glyoxalase II family. As to quaternary structure, monomer. Zn(2+) serves as cofactor.

The catalysed reaction is an S-(2-hydroxyacyl)glutathione + H2O = a 2-hydroxy carboxylate + glutathione + H(+). The protein operates within secondary metabolite metabolism; methylglyoxal degradation; (R)-lactate from methylglyoxal: step 2/2. Its function is as follows. Thiolesterase that catalyzes the hydrolysis of S-D-lactoyl-glutathione to form glutathione and D-lactic acid. The sequence is that of Hydroxyacylglutathione hydrolase from Tolumonas auensis (strain DSM 9187 / NBRC 110442 / TA 4).